Here is a 113-residue protein sequence, read N- to C-terminus: Regulator of rDNA transcription protein 7 (113 aa).

2 consecutive transmembrane segments (helical) span residues 13–35 (FLPI…LFYN) and 70–92 (FLLG…LLFL).

The protein resides in the membrane. Its function is as follows. Identified in a screen for mutants with decreased levels of rDNA transcription. In Saccharomyces cerevisiae (strain ATCC 204508 / S288c) (Baker's yeast), this protein is Regulator of rDNA transcription protein 7 (RRT7).